The following is a 557-amino-acid chain: Interferon alpha/beta receptor 1 (557 aa).

The signal sequence occupies residues 1-27 (MMVVLLGATTLVLVAVAPWVLSAAAGG). Over 28 to 436 (KNLKSPQKVE…EKTKPGNTSK (409 aa)) the chain is Extracellular. Fibronectin type-III domains follow at residues 32-126 (SPQK…FRKA), 127-227 (QIGP…TVEN), 231-329 (PPEN…TEIQ), and 331-432 (FLLP…TKPG). N-linked (GlcNAc...) asparagine glycosylation is found at Asn50, Asn58, Asn81, Asn88, Asn110, and Asn172. Cysteines 79 and 87 form a disulfide. The cysteines at positions 199 and 220 are disulfide-linked. Asn254 is a glycosylation site (N-linked (GlcNAc...) asparagine). A disulfide bridge links Cys283 with Cys291. N-linked (GlcNAc...) asparagine glycosylation is found at Asn313, Asn314, Asn376, Asn416, and Asn433. Residues Cys403 and Cys426 are joined by a disulfide bond. The helical transmembrane segment at 437 to 457 (IWLIVGICIALFALPFVIYAA) threads the bilayer. The Cytoplasmic segment spans residues 458–557 (KVFLRCINYV…TSEELQQDFV (100 aa)). Cys463 carries S-palmitoyl cysteine lipidation. Phosphotyrosine; by TYK2 occurs at positions 466 and 481. The important for interaction with TYK2 stretch occupies residues 491–500 (LLSTSEEQIE). The residue at position 495 (Ser495) is a Phosphoserine. Residues Lys501, Lys525, and Lys526 each participate in a glycyl lysine isopeptide (Lys-Gly) (interchain with G-Cter in ubiquitin) cross-link. The tract at residues 516–557 (ETNQTDEDHKKYSSQTSQDSGNYSNEDESESKTSEELQQDFV) is disordered. Residues 528–539 (SSQTSQDSGNYS) are compositionally biased toward polar residues. At Ser535 the chain carries Phosphoserine.

Belongs to the type II cytokine receptor family. In terms of assembly, heterodimer with IFNAR2; forming the receptor for type I interferon. Interacts with TYK2. Interacts with STAT1 and STAT2; the interaction requires its phosphorylation at Tyr-466. Interacts (serine-phosphorylated form) with FBXW11, the substrate recognition component of a SCF (SKP1-CUL1-F-box protein) E3 ubiquitin-protein ligase complex. Interacts with SHMT2; this promotes interaction with ABRAXAS2 and the BRISC complex. Interacts with TRIM10; this interaction prevents association between IFNAR1 and TYK2. Ubiquitinated, leading to its internalization and degradation. Polyubiquitinated via 'Lys-48'-linked and 'Lys-63'-linked ubiquitin chains, leading to receptor internalization and lysosomal degradation. The 'Lys-63'-linked ubiquitin chains are cleaved off by the BRISC complex. Post-translationally, phosphorylated on tyrosine residues in response to interferon-binding: phosphorylation by TYK2 tyrosine kinase creates docking sites for STAT proteins. Phosphorylated on serine residues in response to interferon binding; this promotes interaction with FBXW11 and ubiquitination. In terms of processing, palmitoylation at Cys-463 is required for the activation of STAT1 and STAT2. In terms of tissue distribution, IFN receptors are present in all tissues and even on the surface of most IFN-resistant cells. Isoform 1, isoform 2 and isoform 3 are expressed in the IFN-alpha sensitive myeloma cell line U266B1. Isoform 2 and isoform 3 are expressed in the IFN-alpha resistant myeloma cell line U266R. Isoform 1 is not expressed in IFN-alpha resistant myeloma cell line U266R.

The protein resides in the cell membrane. Its subcellular location is the late endosome. The protein localises to the lysosome. In terms of biological role, together with IFNAR2, forms the heterodimeric receptor for type I interferons (including interferons alpha, beta, epsilon, omega and kappa). Type I interferon binding activates the JAK-STAT signaling cascade, resulting in transcriptional activation or repression of interferon-regulated genes that encode the effectors of the interferon response. Mechanistically, type I interferon-binding brings the IFNAR1 and IFNAR2 subunits into close proximity with one another, driving their associated Janus kinases (JAKs) (TYK2 bound to IFNAR1 and JAK1 bound to IFNAR2) to cross-phosphorylate one another. The activated kinases phosphorylate specific tyrosine residues on the intracellular domains of IFNAR1 and IFNAR2, forming docking sites for the STAT transcription factors. STAT proteins are then phosphorylated by the JAKs, promoting their translocation into the nucleus to regulate expression of interferon-regulated genes. Can also act independently of IFNAR2: form an active IFNB1 receptor by itself and activate a signaling cascade that does not involve activation of the JAK-STAT pathway. The sequence is that of Interferon alpha/beta receptor 1 (IFNAR1) from Homo sapiens (Human).